The sequence spans 197 residues: Peptide deformylase (197 aa).

Fe cation contacts are provided by Cys-106 and His-148. Residue Glu-149 is part of the active site. His-152 contributes to the Fe cation binding site.

It belongs to the polypeptide deformylase family. Fe(2+) serves as cofactor.

It catalyses the reaction N-terminal N-formyl-L-methionyl-[peptide] + H2O = N-terminal L-methionyl-[peptide] + formate. Functionally, removes the formyl group from the N-terminal Met of newly synthesized proteins. Requires at least a dipeptide for an efficient rate of reaction. N-terminal L-methionine is a prerequisite for activity but the enzyme has broad specificity at other positions. This is Peptide deformylase from Mycobacterium tuberculosis (strain ATCC 25177 / H37Ra).